A 779-amino-acid chain; its full sequence is Lon protease (779 aa).

Positions 10 to 203 (LPLLPLRGLL…ILLTILNNER (194 aa)) constitute a Lon N-terminal domain. An ATP-binding site is contributed by 355-362 (GPPGVGKT). The 182-residue stretch at 591–772 (KDQVGSVTGL…DEVLRHALTK (182 aa)) folds into the Lon proteolytic domain. Catalysis depends on residues Ser-678 and Lys-721.

It belongs to the peptidase S16 family. In terms of assembly, homohexamer. Organized in a ring with a central cavity.

Its subcellular location is the cytoplasm. The enzyme catalyses Hydrolysis of proteins in presence of ATP.. Its function is as follows. ATP-dependent serine protease that mediates the selective degradation of mutant and abnormal proteins as well as certain short-lived regulatory proteins. Required for cellular homeostasis and for survival from DNA damage and developmental changes induced by stress. Degrades polypeptides processively to yield small peptide fragments that are 5 to 10 amino acids long. Binds to DNA in a double-stranded, site-specific manner. This Brevibacillus choshinensis protein is Lon protease.